The following is a 383-amino-acid chain: 8-amino-7-oxononanoate synthase (383 aa).

R21 lines the substrate pocket. Pyridoxal 5'-phosphate is bound at residue G108–Y109. H133 lines the substrate pocket. Pyridoxal 5'-phosphate is bound by residues S179, H207, and T233. At K236 the chain carries N6-(pyridoxal phosphate)lysine. T350 contributes to the substrate binding site.

The protein belongs to the class-II pyridoxal-phosphate-dependent aminotransferase family. BioF subfamily. Homodimer. It depends on pyridoxal 5'-phosphate as a cofactor.

It carries out the reaction 6-carboxyhexanoyl-[ACP] + L-alanine + H(+) = (8S)-8-amino-7-oxononanoate + holo-[ACP] + CO2. The protein operates within cofactor biosynthesis; biotin biosynthesis. In terms of biological role, catalyzes the decarboxylative condensation of pimeloyl-[acyl-carrier protein] and L-alanine to produce 8-amino-7-oxononanoate (AON), [acyl-carrier protein], and carbon dioxide. The polypeptide is 8-amino-7-oxononanoate synthase (Yersinia pestis bv. Antiqua (strain Angola)).